A 148-amino-acid polypeptide reads, in one-letter code: Tetratricopeptide repeat protein 32 (148 aa).

TPR repeat units lie at residues 12–45 (SSAA…CARH), 55–88 (ATAY…LPSF), and 89–122 (EVPY…NPGF).

This Mus musculus (Mouse) protein is Tetratricopeptide repeat protein 32 (Ttc32).